Here is a 292-residue protein sequence, read N- to C-terminus: ATP synthase gamma chain (292 aa).

It belongs to the ATPase gamma chain family. F-type ATPases have 2 components, CF(1) - the catalytic core - and CF(0) - the membrane proton channel. CF(1) has five subunits: alpha(3), beta(3), gamma(1), delta(1), epsilon(1). CF(0) has three main subunits: a, b and c.

The protein localises to the cell inner membrane. Functionally, produces ATP from ADP in the presence of a proton gradient across the membrane. The gamma chain is believed to be important in regulating ATPase activity and the flow of protons through the CF(0) complex. This chain is ATP synthase gamma chain, found in Methylobacterium sp. (strain 4-46).